The chain runs to 242 residues: Phosducin-like protein 2 (242 aa).

The 168-residue stretch at 34-201 (VLRLQKEAMV…LEWKLAEVGA (168 aa)) folds into the Phosducin domain. The tract at residues 89-242 (FGELREISGN…SSNSDSEDTK (154 aa)) is thioredoxin fold.

It belongs to the phosducin family. As to quaternary structure, interacts with the CCT chaperonin complex and actin.

The protein localises to the endoplasmic reticulum. Functionally, essential for male fertility, spermiogenesis and acrosome formation. The sequence is that of Phosducin-like protein 2 (PDCL2) from Bos taurus (Bovine).